A 192-amino-acid polypeptide reads, in one-letter code: Fe/S biogenesis protein NfuA (192 aa).

The [4Fe-4S] cluster site is built by C149 and C152.

This sequence belongs to the NfuA family. Homodimer. [4Fe-4S] cluster serves as cofactor.

Functionally, involved in iron-sulfur cluster biogenesis. Binds a 4Fe-4S cluster, can transfer this cluster to apoproteins, and thereby intervenes in the maturation of Fe/S proteins. Could also act as a scaffold/chaperone for damaged Fe/S proteins. The polypeptide is Fe/S biogenesis protein NfuA (Idiomarina loihiensis (strain ATCC BAA-735 / DSM 15497 / L2-TR)).